Consider the following 338-residue polypeptide: Glycerol-3-phosphate dehydrogenase [NAD(P)+] (338 aa).

NADPH-binding residues include Ser12, Trp13, Arg33, and Lys110. Sn-glycerol 3-phosphate contacts are provided by Lys110, Gly141, and Ser143. Position 145 (Ala145) interacts with NADPH. Residues Lys196, Asp249, Ser259, Arg260, and Asn261 each contribute to the sn-glycerol 3-phosphate site. Lys196 acts as the Proton acceptor in catalysis. An NADPH-binding site is contributed by Arg260. NADPH-binding residues include Val284 and Glu286.

Belongs to the NAD-dependent glycerol-3-phosphate dehydrogenase family.

It localises to the cytoplasm. It carries out the reaction sn-glycerol 3-phosphate + NAD(+) = dihydroxyacetone phosphate + NADH + H(+). The enzyme catalyses sn-glycerol 3-phosphate + NADP(+) = dihydroxyacetone phosphate + NADPH + H(+). Its pathway is membrane lipid metabolism; glycerophospholipid metabolism. In terms of biological role, catalyzes the reduction of the glycolytic intermediate dihydroxyacetone phosphate (DHAP) to sn-glycerol 3-phosphate (G3P), the key precursor for phospholipid synthesis. This Limosilactobacillus reuteri (strain DSM 20016) (Lactobacillus reuteri) protein is Glycerol-3-phosphate dehydrogenase [NAD(P)+].